The sequence spans 415 residues: Serine hydroxymethyltransferase 2 (415 aa).

(6S)-5,6,7,8-tetrahydrofolate contacts are provided by residues Leu-121 and 125 to 127 (GHL). At Lys-229 the chain carries N6-(pyridoxal phosphate)lysine.

The protein belongs to the SHMT family. Homodimer. The cofactor is pyridoxal 5'-phosphate.

It localises to the cytoplasm. The enzyme catalyses (6R)-5,10-methylene-5,6,7,8-tetrahydrofolate + glycine + H2O = (6S)-5,6,7,8-tetrahydrofolate + L-serine. Its pathway is one-carbon metabolism; tetrahydrofolate interconversion. It participates in amino-acid biosynthesis; glycine biosynthesis; glycine from L-serine: step 1/1. In terms of biological role, catalyzes the reversible interconversion of serine and glycine with tetrahydrofolate (THF) serving as the one-carbon carrier. This reaction serves as the major source of one-carbon groups required for the biosynthesis of purines, thymidylate, methionine, and other important biomolecules. Also exhibits THF-independent aldolase activity toward beta-hydroxyamino acids, producing glycine and aldehydes, via a retro-aldol mechanism. This is Serine hydroxymethyltransferase 2 from Bordetella parapertussis (strain 12822 / ATCC BAA-587 / NCTC 13253).